The chain runs to 290 residues: Bifunctional protein FolD (290 aa).

NADP(+) is bound by residues 165–167, Ser-194, and Ile-235; that span reads GRG.

This sequence belongs to the tetrahydrofolate dehydrogenase/cyclohydrolase family. As to quaternary structure, homodimer.

The enzyme catalyses (6R)-5,10-methylene-5,6,7,8-tetrahydrofolate + NADP(+) = (6R)-5,10-methenyltetrahydrofolate + NADPH. The catalysed reaction is (6R)-5,10-methenyltetrahydrofolate + H2O = (6R)-10-formyltetrahydrofolate + H(+). It functions in the pathway one-carbon metabolism; tetrahydrofolate interconversion. In terms of biological role, catalyzes the oxidation of 5,10-methylenetetrahydrofolate to 5,10-methenyltetrahydrofolate and then the hydrolysis of 5,10-methenyltetrahydrofolate to 10-formyltetrahydrofolate. The protein is Bifunctional protein FolD of Syntrophotalea carbinolica (strain DSM 2380 / NBRC 103641 / GraBd1) (Pelobacter carbinolicus).